Reading from the N-terminus, the 600-residue chain is Rhesus-like glycoprotein B (600 aa).

The Cytoplasmic portion of the chain corresponds to Met-1–Ser-16. The helical transmembrane segment at Ile-17–Trp-37 threads the bilayer. The Extracellular portion of the chain corresponds to Val-38–Tyr-73. Asn-46 carries N-linked (GlcNAc...) asparagine glycosylation. A helical transmembrane segment spans residues Gly-74–Leu-94. Over Arg-95–Leu-102 the chain is Cytoplasmic. Residues Gly-103 to Phe-123 form a helical membrane-spanning segment. The Extracellular portion of the chain corresponds to Glu-124–Thr-145. Residues Val-146 to Gly-166 form a helical membrane-spanning segment. Topologically, residues Arg-167–Pro-170 are cytoplasmic. The helical transmembrane segment at Leu-171–Gly-191 threads the bilayer. The Extracellular portion of the chain corresponds to Glu-192–Asp-199. The helical transmembrane segment at Val-200–Phe-220 threads the bilayer. Residues Leu-221 to Tyr-240 lie on the Cytoplasmic side of the membrane. A helical membrane pass occupies residues Phe-241 to Ala-261. Residues Pro-262–Thr-274 are Extracellular-facing. Residues Phe-275–Leu-295 form a helical membrane-spanning segment. The Cytoplasmic portion of the chain corresponds to Gly-296–His-303. The helical transmembrane segment at Val-304–Ile-323 threads the bilayer. Residues Asn-324 to Pro-325 lie on the Extracellular side of the membrane. A helical transmembrane segment spans residues Gly-326–Ile-346. The Cytoplasmic portion of the chain corresponds to Ser-347 to Gly-361. The chain crosses the membrane as a helical span at residues Ile-362–Trp-382. The Extracellular segment spans residues Lys-383–Ala-411. A helical transmembrane segment spans residues Ala-412–Leu-432. Topologically, residues Lys-433–Val-600 are cytoplasmic. Positions Asn-471–Val-600 are disordered. Positions Asn-498 to Arg-510 are enriched in basic and acidic residues. A compositionally biased stretch (low complexity) spans Glu-519–Ser-529. The span at Arg-540 to Lys-554 shows a compositional bias: basic residues. The span at Ser-555–Glu-566 shows a compositional bias: basic and acidic residues. Over residues Asn-571–Asn-580 the composition is skewed to low complexity. The segment covering Ala-581 to Val-600 has biased composition (polar residues).

The protein belongs to the ammonium transporter (TC 2.A.49) family. Rh subfamily.

The protein resides in the membrane. Functionally, may be a carbon dioxide/bicarbonate transporter. The polypeptide is Rhesus-like glycoprotein B (rhgB) (Dictyostelium discoideum (Social amoeba)).